The chain runs to 546 residues: Undecaprenyl phosphate-alpha-4-amino-4-deoxy-L-arabinose arabinosyl transferase (546 aa).

The next 12 helical transmembrane spans lie at 6–26 (INLAVIVPLFFIMLYLLPLGL), 87–107 (AASAFSTLGAAFCLFLLVGRF), 113–133 (AWVTVSVFLSLFLVSNLGTYS), 177–197 (LLTKGFLALALPVIVVVPFMI), 208–228 (WGWWVMLVALIVTLPWALAIH), 260–280 (YYLPYLLLGTLPWLFLAPSAI), 289–309 (SPLLRYALLWALIPFIFFSAA), 313–333 (LVTYILPCMAPLAIILAQGII), 345–365 (IGSVINCAFFSLISVAVIVLF), 380–400 (PWLLVVVCGSWAVLAYISIKA), 410–430 (YMLMPLSLFLLAWAIIPNISI), and 450–467 (AILIADYPSTMSAFNWYF).

This sequence belongs to the glycosyltransferase 83 family.

The protein resides in the cell inner membrane. It carries out the reaction 4-amino-4-deoxy-alpha-L-arabinopyranosyl di-trans,octa-cis-undecaprenyl phosphate + lipid IVA = lipid IIA + di-trans,octa-cis-undecaprenyl phosphate.. The protein operates within lipopolysaccharide metabolism; 4-amino-4-deoxy-beta-L-arabinose-lipid A biosynthesis. In terms of biological role, catalyzes the transfer of the L-Ara4N moiety of the glycolipid undecaprenyl phosphate-alpha-L-Ara4N to lipid A. The modified arabinose is attached to lipid A and is required for resistance to polymyxin and cationic antimicrobial peptides. This chain is Undecaprenyl phosphate-alpha-4-amino-4-deoxy-L-arabinose arabinosyl transferase, found in Shewanella sediminis (strain HAW-EB3).